The sequence spans 754 residues: MIVFLVFKHLFSLRLITMFFLLHFIVLINVKDFALTQGSMITPSCQKGYFPCGNLTKCLPRAFHCDGKDDCGNGADEENCGDTSGWATIFGTVHGNANSVALTQECFLKQYPQCCDCKETELECVNGDLKSVPMISNNVTLLSLKKNKIHSLPDKVFIKYTKLKKIFLQHNCIRHISRKAFFGLCNLQILYLNHNCITTLRPGIFKDLHQLTWLILDDNPITRISQRLFTGLNSLFFLSMVNNYLEALPKQMCAQMPQLNWVDLEGNRIKYLTNSTFLSCDSLTVLFLPRNQIGFVPEKTFSSLKNLGELDLSSNTITELSPHLFKDLKLLQKLNLSSNPLMYLHKNQFESLKQLQSLDLERIEIPNINTRMFQPMKNLSHIYFKNFRYCSYAPHVRICMPLTDGISSFEDLLANNILRIFVWVIAFITCFGNLFVIGMRSFIKAENTTHAMSIKILCCADCLMGVYLFFVGIFDIKYRGQYQKYALLWMESVQCRLMGFLAMLSTEVSVLLLTYLTLEKFLVIVFPFSNIRPGKRQTSVILICIWMAGFLIAVIPFWNKDYFGNFYGKNGVCFPLYYDQTEDIGSKGYSLGIFLGVNLLAFLIIVFSYITMFCSIQKTALQTTEVRNCFGREVAVANRFFFIVFSDAICWIPVFVVKILSLFRVEIPDTMTSWIVIFFLPVNSALNPILYTLTTNFFKDKLKQLLHKHQRKSIFKIKKKSLSTSIVWIEDSSSLKLGVLNKITLGDSIMKPVS.

Topologically, residues 1-416 (MIVFLVFKHL…SSFEDLLANN (416 aa)) are extracellular. One can recognise an LDL-receptor class A domain in the interval 44 to 81 (SCQKGYFPCGNLTKCLPRAFHCDGKDDCGNGADEENCG). 3 disulfides stabilise this stretch: C45-C58, C52-C71, and C65-C80. N-linked (GlcNAc...) asparagine glycosylation occurs at N54. N-linked (GlcNAc...) asparagine glycosylation is present at N138. LRR repeat units follow at residues 138-159 (NVTLLSLKKNKIHSLPDKVFIK), 162-183 (KLKKIFLQHNCIRHISRKAFFG), 186-207 (NLQILYLNHNCITTLRPGIFKD), 210-231 (QLTWLILDDNPITRISQRLFTG), 234-255 (SLFFLSMVNNYLEALPKQMCAQ), 258-279 (QLNWVDLEGNRIKYLTNSTFLS), 282-303 (SLTVLFLPRNQIGFVPEKTFSS), 306-327 (NLGELDLSSNTITELSPHLFKD), 330-351 (LLQKLNLSSNPLMYLHKNQFES), and 354-375 (QLQSLDLERIEIPNINTRMFQP). N274 carries N-linked (GlcNAc...) asparagine glycosylation. A glycan (N-linked (GlcNAc...) asparagine) is linked at N335. The N-linked (GlcNAc...) asparagine glycan is linked to N378. The chain crosses the membrane as a helical span at residues 417-437 (ILRIFVWVIAFITCFGNLFVI). The Cytoplasmic segment spans residues 438–455 (GMRSFIKAENTTHAMSIK). The helical transmembrane segment at 456 to 476 (ILCCADCLMGVYLFFVGIFDI) threads the bilayer. The Extracellular segment spans residues 477–495 (KYRGQYQKYALLWMESVQC). A disulfide bridge links C495 with C573. The chain crosses the membrane as a helical span at residues 496–518 (RLMGFLAMLSTEVSVLLLTYLTL). Topologically, residues 519 to 537 (EKFLVIVFPFSNIRPGKRQ) are cytoplasmic. A helical transmembrane segment spans residues 538 to 558 (TSVILICIWMAGFLIAVIPFW). The Extracellular portion of the chain corresponds to 559–592 (NKDYFGNFYGKNGVCFPLYYDQTEDIGSKGYSLG). A helical membrane pass occupies residues 593–613 (IFLGVNLLAFLIIVFSYITMF). The Cytoplasmic portion of the chain corresponds to 614-639 (CSIQKTALQTTEVRNCFGREVAVANR). Residues 640-660 (FFFIVFSDAICWIPVFVVKIL) traverse the membrane as a helical segment. The Extracellular portion of the chain corresponds to 661–670 (SLFRVEIPDT). The helical transmembrane segment at 671–691 (MTSWIVIFFLPVNSALNPILY) threads the bilayer. At 692-754 (TLTTNFFKDK…LGDSIMKPVS (63 aa)) the chain is on the cytoplasmic side.

The protein belongs to the G-protein coupled receptor 1 family. Expressed mainly in the brain, kidney, muscle, testis, thyroid, uterus, peripheral blood cells and bone marrow.

Its subcellular location is the cell membrane. In terms of biological role, receptor for relaxin. The activity of this receptor is mediated by G proteins leading to stimulation of adenylate cyclase and an increase of cAMP. May also be a receptor for Leydig insulin-like peptide (INSL3). This chain is Relaxin receptor 2 (RXFP2), found in Homo sapiens (Human).